A 236-amino-acid polypeptide reads, in one-letter code: Uridylate kinase (236 aa).

10–13 lines the ATP pocket; the sequence is KLSG. A UMP-binding site is contributed by Gly52. ATP is bound by residues Gly53 and Arg57. Residues Asp72 and 133-140 each bind UMP; that span reads TGNPFFTT. Residues Thr160, Tyr166, and Asp169 each coordinate ATP.

Belongs to the UMP kinase family. As to quaternary structure, homohexamer.

Its subcellular location is the cytoplasm. It carries out the reaction UMP + ATP = UDP + ADP. Its pathway is pyrimidine metabolism; CTP biosynthesis via de novo pathway; UDP from UMP (UMPK route): step 1/1. Inhibited by UTP. Functionally, catalyzes the reversible phosphorylation of UMP to UDP. This chain is Uridylate kinase, found in Ralstonia nicotianae (strain ATCC BAA-1114 / GMI1000) (Ralstonia solanacearum).